We begin with the raw amino-acid sequence, 203 residues long: Outer-membrane lipoprotein carrier protein (203 aa).

An N-terminal signal peptide occupies residues 1 to 19 (MKKSIVVLFSAVLPFAVFA).

This sequence belongs to the LolA family. In terms of assembly, monomer.

The protein resides in the periplasm. In terms of biological role, participates in the translocation of lipoproteins from the inner membrane to the outer membrane. Only forms a complex with a lipoprotein if the residue after the N-terminal Cys is not an aspartate (The Asp acts as a targeting signal to indicate that the lipoprotein should stay in the inner membrane). This is Outer-membrane lipoprotein carrier protein from Shewanella amazonensis (strain ATCC BAA-1098 / SB2B).